The chain runs to 538 residues: Metal transporter Nramp5 (538 aa).

12 helical membrane passes run 44–64 (FLAHVGPGFMVSLAYLDPGNL), 77–97 (ELLWVILIGLIFALIIQSLAA), 118–138 (FVKIFLWLLAELAVIAADIPE), 140–160 (IGTAFAFNILFHIPVWVGVLI), 181–201 (FLISMLVFVMAACFFGELSIV), 227–247 (IALLGALVMPHNLFLHSALVL), 264–284 (FFLYESGFALFVALLINIAVV), 324–346 (SAIVYGVALLASGQSSTITGTYA), 365–385 (NLMTRTIAIAPSLIVSIIGGS), 391–411 (LIIIASMILSFELPFALIPLL), 427–447 (IYIIVFSWFLGLLIIGINMYF), and 467–487 (VLVGAAVFPFMLVYIVAVVYL). Residues 518 to 538 (AVDDDEPLPYRDDLADIPLPR) form a disordered region.

The protein belongs to the NRAMP (TC 2.A.55) family.

The protein localises to the membrane. In terms of biological role, probable metal transporter. This Oryza sativa subsp. japonica (Rice) protein is Metal transporter Nramp5 (NRAMP5).